The primary structure comprises 364 residues: Membrane-bound lytic murein transglycosylase C (364 aa).

The first 19 residues, 1 to 19 (MNKYKKFLPLLVLIPFLAS), serve as a signal peptide directing secretion. Residue C20 is the site of N-palmitoyl cysteine attachment. A lipid anchor (S-diacylglycerol cysteine) is attached at C20.

This sequence belongs to the transglycosylase Slt family.

The protein localises to the cell outer membrane. It catalyses the reaction Exolytic cleavage of the (1-&gt;4)-beta-glycosidic linkage between N-acetylmuramic acid (MurNAc) and N-acetylglucosamine (GlcNAc) residues in peptidoglycan, from either the reducing or the non-reducing ends of the peptidoglycan chains, with concomitant formation of a 1,6-anhydrobond in the MurNAc residue.. Functionally, murein-degrading enzyme. May play a role in recycling of muropeptides during cell elongation and/or cell division. In Glaesserella parasuis serovar 5 (strain SH0165) (Haemophilus parasuis), this protein is Membrane-bound lytic murein transglycosylase C.